Reading from the N-terminus, the 976-residue chain is Vacuolar membrane protease (976 aa).

Topologically, residues 1–15 are cytoplasmic; the sequence is MKLKSVFRSVLKYRK. The chain crosses the membrane as a helical span at residues 16–36; it reads TNLSLLLLITYSIITLLYIFD. At 37-359 the chain is on the vacuolar side; that stretch reads HERYKLNLPK…KFFVISAKTL (323 aa). Asn96 and Asn121 each carry an N-linked (GlcNAc...) asparagine glycan. Zn(2+) is bound by residues His156 and Asp168. Asn189 carries an N-linked (GlcNAc...) asparagine glycan. Glu200 (proton acceptor) is an active-site residue. Position 201 (Glu201) interacts with Zn(2+). Asn212 and Asn217 each carry an N-linked (GlcNAc...) asparagine glycan. The Zn(2+) site is built by Glu226 and His300. Residues 360–380 form a helical membrane-spanning segment; sequence FYWNCIFLLVSPVVAIGLYLI. Residues 381-392 are Cytoplasmic-facing; sequence SRDRMTWKSHSW. The helical transmembrane segment at 393–412 threads the bilayer; that stretch reads LSWTRFPLSLAAGIIVQKLF. Over 413-428 the chain is Vacuolar; the sequence is SNDIIRSNPLTFSRNY. Residues 429–449 form a helical membrane-spanning segment; sequence FWPISAFFTQVIFTSYVLINC. The Cytoplasmic portion of the chain corresponds to 450–461; the sequence is SNFFFPCADMKS. The helical transmembrane segment at 462–482 threads the bilayer; it reads LSIIELFIILWTILLFTSKLL. Topologically, residues 483 to 496 are vacuolar; that stretch reads YSSDYRYTGLYPLS. Residues 497–517 traverse the membrane as a helical segment; that stretch reads IFFLLSTIAAILRLLALALGM. The Cytoplasmic portion of the chain corresponds to 518–627; it reads RTRKRLGREC…NSLKLEYTDY (110 aa). The disordered stretch occupies residues 528–610; the sequence is RDHHSNYSSH…PLLKGSNSME (83 aa). The span at 549-558 shows a compositional bias: polar residues; that stretch reads NLEQPQDQFT. Residues 559 to 570 show a composition bias toward low complexity; it reads SSQDDQASIQDD. A compositionally biased stretch (basic and acidic residues) spans 582–601; it reads NVDEDHGMDSSSQQHDERVP. The chain crosses the membrane as a helical span at residues 628-648; it reads AWIIQFLLIVPIPSFILFNSV. Residues 649-668 lie on the Vacuolar side of the membrane; it reads DVIMDALNHTVQEGSKATFD. An N-linked (GlcNAc...) asparagine glycan is attached at Asn656. The helical transmembrane segment at 669-689 threads the bilayer; it reads VLRFGMVGSILMALPILPFFY. Residues 690-692 are Cytoplasmic-facing; the sequence is KVN. The chain crosses the membrane as a helical span at residues 693–713; the sequence is YITISLTALLFLISASKTLLV. Residues 714–976 lie on the Vacuolar side of the membrane; it reads HPFTNSNPLK…LVIVKDAIIL (263 aa). N-linked (GlcNAc...) asparagine glycans are attached at residues Asn768, Asn796, Asn811, Asn866, and Asn937.

Belongs to the peptidase M28 family. Zn(2+) serves as cofactor.

Its subcellular location is the vacuole membrane. In terms of biological role, may be involved in vacuolar sorting and osmoregulation. The protein is Vacuolar membrane protease of Saccharomyces cerevisiae (strain Lalvin EC1118 / Prise de mousse) (Baker's yeast).